The chain runs to 323 residues: GTP 3',8-cyclase (323 aa).

Residues 4–233 (KYGREIDYLR…NGPAKYISIE (230 aa)) form the Radical SAM core domain. Residue Arg-13 coordinates GTP. [4Fe-4S] cluster is bound by residues Cys-20 and Cys-24. Tyr-26 is a binding site for S-adenosyl-L-methionine. Cys-27 contacts [4Fe-4S] cluster. Arg-63 is a GTP binding site. An S-adenosyl-L-methionine-binding site is contributed by Gly-67. Thr-94 contacts GTP. Ser-118 lines the S-adenosyl-L-methionine pocket. Residue Lys-154 coordinates GTP. Met-188 serves as a coordination point for S-adenosyl-L-methionine. Positions 250 and 253 each coordinate [4Fe-4S] cluster. Residue 255–257 (RIR) coordinates GTP. Cys-267 contacts [4Fe-4S] cluster.

Belongs to the radical SAM superfamily. MoaA family. As to quaternary structure, monomer and homodimer. It depends on [4Fe-4S] cluster as a cofactor.

It carries out the reaction GTP + AH2 + S-adenosyl-L-methionine = (8S)-3',8-cyclo-7,8-dihydroguanosine 5'-triphosphate + 5'-deoxyadenosine + L-methionine + A + H(+). Its pathway is cofactor biosynthesis; molybdopterin biosynthesis. In terms of biological role, catalyzes the cyclization of GTP to (8S)-3',8-cyclo-7,8-dihydroguanosine 5'-triphosphate. This is GTP 3',8-cyclase from Clostridium perfringens (strain SM101 / Type A).